A 259-amino-acid chain; its full sequence is Transcription factor bHLH125 (259 aa).

The region spanning 73–125 (SKKMKHRDIERQRRQEVSSLFKRLRTLLPFQYIQGKRSTSDHIVQAVNYIKDL) is the bHLH domain.

As to quaternary structure, homodimer.

The protein resides in the nucleus. This is Transcription factor bHLH125 (BHLH125) from Arabidopsis thaliana (Mouse-ear cress).